Consider the following 723-residue polypeptide: Probable G-protein coupled receptor 149 (723 aa).

The Extracellular segment spans residues 1–31 (MSVMPSNLSLNGTSFFAENHSIMDKPNEQRT). N-linked (GlcNAc...) asparagine glycans are attached at residues N7, N11, and N19. Residues 32-52 (LNVFLFCSTFIIAFTVLLGSI) form a helical membrane-spanning segment. At 53-69 (YSLVSLLKLQNKSTISM) the chain is on the cytoplasmic side. A helical transmembrane segment spans residues 70–90 (IVTSLSIDDLISIVPVIIFML). Over 91 to 106 (TQWSSDALPQPLCTTS) the chain is Extracellular. C103 and C181 are disulfide-bonded. A helical membrane pass occupies residues 107 to 127 (ALIYLFQGISSNLKGSLIVSY). Residues 128-148 (NFYSINKTETMNCSASKRRVS) are Cytoplasmic-facing. Residues 149 to 169 (MVWAILSIWIVSLLICILPLC) traverse the membrane as a helical segment. The Extracellular portion of the chain corresponds to 170 to 188 (GWGKYIPTTWGCFTDHASS). Residues 189–209 (YILFLFIVYSLCFCLLTVLSV) form a helical membrane-spanning segment. Residues 210–306 (PLTYQLLCSD…SFTVGFAQKR (97 aa)) are Cytoplasmic-facing. A helical membrane pass occupies residues 307-327 (FSLILALTKVILWLPMMIQMV). The Extracellular segment spans residues 328–338 (VQHITGYQSFS). The helical transmembrane segment at 339-359 (FETLSFLLTLLAATVTPVFVL) threads the bilayer. The Cytoplasmic segment spans residues 360–723 (SEHWIHLPCG…RKREEDGNSN (364 aa)). Positions 451 to 513 (TTDSARPGPA…ERRLSHEEGH (63 aa)) are disordered. The segment covering 501–513 (EGPERRLSHEEGH) has biased composition (basic and acidic residues).

This sequence belongs to the G-protein coupled receptor 1 family. As to expression, specific expression in peripheral nervous system, including nerve growth factor-dependent sensory and sympathetic neurons, as well as enteric neurons.

It is found in the cell membrane. Its function is as follows. Orphan receptor. In Gallus gallus (Chicken), this protein is Probable G-protein coupled receptor 149 (GPR149).